A 332-amino-acid chain; its full sequence is Anthranilate phosphoribosyltransferase (332 aa).

Residues Gly-78, 81–82, Ser-86, 88–91, 106–114, and Ser-118 contribute to the 5-phospho-alpha-D-ribose 1-diphosphate site; these read GD, NIST, and KHGNKSITS. Gly-78 is an anthranilate binding site. A Mg(2+)-binding site is contributed by Ser-90. Asn-109 contacts anthranilate. Arg-163 is a binding site for anthranilate. Mg(2+) contacts are provided by Asp-222 and Glu-223.

This sequence belongs to the anthranilate phosphoribosyltransferase family. As to quaternary structure, homodimer. The cofactor is Mg(2+).

It catalyses the reaction N-(5-phospho-beta-D-ribosyl)anthranilate + diphosphate = 5-phospho-alpha-D-ribose 1-diphosphate + anthranilate. It functions in the pathway amino-acid biosynthesis; L-tryptophan biosynthesis; L-tryptophan from chorismate: step 2/5. Functionally, catalyzes the transfer of the phosphoribosyl group of 5-phosphorylribose-1-pyrophosphate (PRPP) to anthranilate to yield N-(5'-phosphoribosyl)-anthranilate (PRA). The chain is Anthranilate phosphoribosyltransferase from Staphylococcus aureus (strain Mu3 / ATCC 700698).